Here is a 455-residue protein sequence, read N- to C-terminus: Zinc finger SWIM domain-containing protein 1 (455 aa).

Residues 264 to 288 are disordered; the sequence is ASLSLAETPQDSHTPSEASAENPNT. The SWIM-type zinc finger occupies 333–375; sequence MSIQILEDTHTVQPQPPASCSCYFNQAFHLPCRHILAMLSARQ.

The polypeptide is Zinc finger SWIM domain-containing protein 1 (Zswim1) (Mus musculus (Mouse)).